A 330-amino-acid polypeptide reads, in one-letter code: Olfactory receptor 11H6 (330 aa).

Residues 1–43 (MFFIIHSLVTSVFLTALGPQNRTMHFVTEFVLLGFHGQREMQS) are Extracellular-facing. Asn-21 is a glycosylation site (N-linked (GlcNAc...) asparagine). The chain crosses the membrane as a helical span at residues 44–64 (CFFSFILVLYLLTLLGNGAIV). Residues 65–72 (CAVKLDRR) are Cytoplasmic-facing. The helical transmembrane segment at 73 to 93 (LHTPMYILLGNFAFLEIWYIS) threads the bilayer. Topologically, residues 94 to 117 (STVPNMLVNILSEIKTISFSGCFL) are extracellular. A disulfide bond links Cys-115 and Cys-207. The chain crosses the membrane as a helical span at residues 118-138 (QFYFFFSLGTTECFFLSVMAY). Topologically, residues 139–157 (DRYLAICRPLHYPSIMTGK) are cytoplasmic. Residues 158–178 (FCIILVCVCWVGGFLCYPVPI) form a helical membrane-spanning segment. At 179-215 (VLISQLPFCGPNIIDHLVCDPGPLFALACISAPSTEL) the chain is on the extracellular side. A helical transmembrane segment spans residues 216–235 (ICYTFNSMIIFGPFLSILGS). At 236 to 255 (YTLVIRAVLCIPSGAGRTKA) the chain is on the cytoplasmic side. A helical membrane pass occupies residues 256–276 (FSTCGSHLMVVSLFYGTLMVM). The Extracellular segment spans residues 277 to 289 (YVSPTSGNPAGMQ). Residues 290-310 (KIITLVYTAMTPFLNPLIYSL) form a helical membrane-spanning segment. Topologically, residues 311-330 (RNKDMKDALKRVLGLTVSQN) are cytoplasmic.

The protein belongs to the G-protein coupled receptor 1 family.

It localises to the cell membrane. Its function is as follows. Odorant receptor. This Homo sapiens (Human) protein is Olfactory receptor 11H6 (OR11H6).